We begin with the raw amino-acid sequence, 178 residues long: Putative RING-H2 finger protein ATL19 (178 aa).

Residues 11-31 form a helical membrane-spanning segment; sequence LISVLGLAVFIGLCILLVVLI. Residues 130-172 form an RING-type; atypical zinc finger; that stretch reads CAICLSGYVVNEECRVFPVCRHIYHALCIDAWLKNHLTCPTCR.

Belongs to the RING-type zinc finger family. ATL subfamily.

It is found in the membrane. The enzyme catalyses S-ubiquitinyl-[E2 ubiquitin-conjugating enzyme]-L-cysteine + [acceptor protein]-L-lysine = [E2 ubiquitin-conjugating enzyme]-L-cysteine + N(6)-ubiquitinyl-[acceptor protein]-L-lysine.. Its pathway is protein modification; protein ubiquitination. The sequence is that of Putative RING-H2 finger protein ATL19 (ATL19) from Arabidopsis thaliana (Mouse-ear cress).